The following is a 328-amino-acid chain: Carbonic anhydrase-related protein 10 (328 aa).

One can recognise an Alpha-carbonic anhydrase domain in the interval 31-301 (GWWAYKEVVQ…LNNRCIRTNI (271 aa)).

It belongs to the alpha-carbonic anhydrase family.

Its function is as follows. Does not have a catalytic activity. The protein is Carbonic anhydrase-related protein 10 (CA10) of Macaca fascicularis (Crab-eating macaque).